The primary structure comprises 191 residues: Calcium-activated potassium channel subunit beta-1 (191 aa).

The Cytoplasmic segment spans residues 1–18 (MVKKLVMAQKRGETRALC). The helical transmembrane segment at 19 to 39 (LGVTMVVCAVITYYILVTTVL) threads the bilayer. At 40–157 (PLYQKSVWTQ…FQRLYGPQAL (118 aa)) the chain is on the extracellular side. Residues Asn80 and Asn142 are each glycosylated (N-linked (GlcNAc...) asparagine). Residues 158–178 (LFSLFWPTFLLTGGLLIIAMV) traverse the membrane as a helical segment. Residues 179 to 191 (KSNQYLSILAAQK) lie on the Cytoplasmic side of the membrane.

The protein belongs to the KCNMB (TC 8.A.14.1) family. KCNMB1 subfamily. Interacts with KCNMA1 tetramer. There are probably 4 molecules of KCMNB1 per KCNMA1 tetramer. N-glycosylated. Abundantly expressed in smooth muscle. Low levels of expression in most other tissues. Within the brain, relatively high levels found in hippocampus and corpus callosum.

It localises to the membrane. In terms of biological role, regulatory subunit of the calcium activated potassium KCNMA1 (maxiK) channel. Modulates the calcium sensitivity and gating kinetics of KCNMA1, thereby contributing to KCNMA1 channel diversity. Increases the apparent Ca(2+)/voltage sensitivity of the KCNMA1 channel. It also modifies KCNMA1 channel kinetics and alters its pharmacological properties. It slows down the activation and the deactivation kinetics of the channel. Acts as a negative regulator of smooth muscle contraction by enhancing the calcium sensitivity to KCNMA1. Its presence is also a requirement for internal binding of the KCNMA1 channel opener dehydrosoyasaponin I (DHS-1) triterpene glycoside and for external binding of the agonist hormone 17-beta-estradiol (E2). Increases the binding activity of charybdotoxin (CTX) toxin to KCNMA1 peptide blocker by increasing the CTX association rate and decreasing the dissociation rate. This Homo sapiens (Human) protein is Calcium-activated potassium channel subunit beta-1 (KCNMB1).